Here is a 443-residue protein sequence, read N- to C-terminus: Exodeoxyribonuclease 7 large subunit (443 aa).

The protein belongs to the XseA family. In terms of assembly, heterooligomer composed of large and small subunits.

The protein resides in the cytoplasm. The catalysed reaction is Exonucleolytic cleavage in either 5'- to 3'- or 3'- to 5'-direction to yield nucleoside 5'-phosphates.. Its function is as follows. Bidirectionally degrades single-stranded DNA into large acid-insoluble oligonucleotides, which are then degraded further into small acid-soluble oligonucleotides. In Vibrio vulnificus (strain YJ016), this protein is Exodeoxyribonuclease 7 large subunit.